Reading from the N-terminus, the 372-residue chain is Serine/threonine-protein kinase 17B (372 aa).

The 261-residue stretch at 33-293 (ILTSKELGRG…AEICLSHSWL (261 aa)) folds into the Protein kinase domain. ATP is bound by residues 39–47 (LGRGKFAVV) and Lys62. Asp158 acts as the Proton acceptor in catalysis. The disordered stretch occupies residues 305 to 362 (EETSSSSQTQDHSVRSSEDKTSKSSCNGTCGDREDKENIPEDSSMVSKRFRFDDSLPN). Basic and acidic residues predominate over residues 316 to 326 (HSVRSSEDKTS).

The protein belongs to the protein kinase superfamily. CAMK Ser/Thr protein kinase family. DAP kinase subfamily. In terms of assembly, interacts with CHP1; the interaction induces CHP1 to translocate from the Golgi to the nucleus. In terms of processing, autophosphorylated. In terms of tissue distribution, highly expressed in placenta, lung, pancreas. Lower levels in heart, brain, liver, skeletal muscle and kidney.

The protein resides in the nucleus. It localises to the cell membrane. Its subcellular location is the endoplasmic reticulum-Golgi intermediate compartment. The catalysed reaction is L-seryl-[protein] + ATP = O-phospho-L-seryl-[protein] + ADP + H(+). It catalyses the reaction L-threonyl-[protein] + ATP = O-phospho-L-threonyl-[protein] + ADP + H(+). Functionally, phosphorylates myosin light chains. Acts as a positive regulator of apoptosis. This chain is Serine/threonine-protein kinase 17B (STK17B), found in Homo sapiens (Human).